A 441-amino-acid polypeptide reads, in one-letter code: Probable acetylornithine aminotransferase, mitochondrial (441 aa).

Lys-294 is subject to N6-(pyridoxal phosphate)lysine.

It belongs to the class-III pyridoxal-phosphate-dependent aminotransferase family. Pyridoxal 5'-phosphate is required as a cofactor.

The protein localises to the mitochondrion matrix. It catalyses the reaction N(2)-acetyl-L-ornithine + 2-oxoglutarate = N-acetyl-L-glutamate 5-semialdehyde + L-glutamate. It functions in the pathway amino-acid biosynthesis; L-arginine biosynthesis; N(2)-acetyl-L-ornithine from L-glutamate: step 4/4. In Schizosaccharomyces pombe (strain 972 / ATCC 24843) (Fission yeast), this protein is Probable acetylornithine aminotransferase, mitochondrial (arg1).